The sequence spans 694 residues: MTRTALVTTALPYANGPLHLGHLVGYIQADIWVRARRLRGDKTWFVCADDTHGTPIMLAAEKAGVTPEAFIANIQASHERDFAAFGVTFDHYDSTNSPVNRELTEAFYTKLEAAGHISRRSVAQFYDPAKGMFLPDRYIKGICPNCGSADQYGDNCEVCGATYAPTELKEPKSVISGATPELRDSEHFFFEVGHFDGFLREWLDGDVALPGVKAKLKEWLDAEGGLRAWDISRDAPYFGFQIPGQPGKYFYVWLDAPIGYLCSFKTLCAQMGEDFQAHLAAGTQTELHHFIGKDIVNFHGLFWPAVLHGTGHRAPTRLHVNGYLMVDGAKMSKSRGTFVMARTFLDVGLEPEALRYYFAAKSSGGVDDLDLNLGDFVARVNADLVGKFVNLASRCAGFIGKRFDGKLADALPDPAQYARFVEALAPIREAYERNDPASAIRQTMALADEANKYIDDTKPWVIAKQEGADAQLQSVCTQGLNLFRLLVAALKPILPRTAAEAEAFLSAPMTSWEDVSRPLTCHVIQPYTALFTRIDPKLIDAMTDASKDTMAAPAAPAATTKPAPSKADAAPAAVANPQSPTANPGFIGMDDFAKLDLRIGKVLVCEAVEGSDKLLRFELDAGELGKRQIFSGIRASYGEPETLVGRSVVFIANLAPRKMRFGISEGMILSAGFDGGTLALLDADAGAQPGMPVR.

The short motif at 12–22 (PYANGPLHLGH) is the 'HIGH' region element. Positions 143, 146, 156, and 159 each coordinate Zn(2+). Positions 330-334 (KMSKS) match the 'KMSKS' region motif. Position 333 (Lys333) interacts with ATP. The segment at 552 to 577 (APAAPAATTKPAPSKADAAPAAVANP) is disordered. The 104-residue stretch at 591–694 (DFAKLDLRIG…AGAQPGMPVR (104 aa)) folds into the tRNA-binding domain.

Belongs to the class-I aminoacyl-tRNA synthetase family. MetG type 1 subfamily. In terms of assembly, homodimer. It depends on Zn(2+) as a cofactor.

The protein resides in the cytoplasm. The enzyme catalyses tRNA(Met) + L-methionine + ATP = L-methionyl-tRNA(Met) + AMP + diphosphate. Its function is as follows. Is required not only for elongation of protein synthesis but also for the initiation of all mRNA translation through initiator tRNA(fMet) aminoacylation. The polypeptide is Methionine--tRNA ligase (Xanthomonas campestris pv. campestris (strain B100)).